The sequence spans 475 residues: Ribulose bisphosphate carboxylase large chain (475 aa).

Positions Met1–Ser2 are excised as a propeptide. The residue at position 3 (Pro3) is an N-acetylproline. An N6,N6,N6-trimethyllysine modification is found at Lys14. 2 residues coordinate substrate: Asn123 and Thr173. The active-site Proton acceptor is Lys175. Lys177 is a binding site for substrate. Mg(2+) contacts are provided by Lys201, Asp203, and Glu204. Lys201 carries the post-translational modification N6-carboxylysine. His294 acts as the Proton acceptor in catalysis. Positions 295, 327, and 379 each coordinate substrate.

Belongs to the RuBisCO large chain family. Type I subfamily. As to quaternary structure, heterohexadecamer of 8 large chains and 8 small chains; disulfide-linked. The disulfide link is formed within the large subunit homodimers. Mg(2+) is required as a cofactor. In terms of processing, the disulfide bond which can form in the large chain dimeric partners within the hexadecamer appears to be associated with oxidative stress and protein turnover.

Its subcellular location is the plastid. It is found in the chloroplast. The catalysed reaction is 2 (2R)-3-phosphoglycerate + 2 H(+) = D-ribulose 1,5-bisphosphate + CO2 + H2O. It catalyses the reaction D-ribulose 1,5-bisphosphate + O2 = 2-phosphoglycolate + (2R)-3-phosphoglycerate + 2 H(+). Functionally, ruBisCO catalyzes two reactions: the carboxylation of D-ribulose 1,5-bisphosphate, the primary event in carbon dioxide fixation, as well as the oxidative fragmentation of the pentose substrate in the photorespiration process. Both reactions occur simultaneously and in competition at the same active site. In Calycanthus floridus var. glaucus (Eastern sweetshrub), this protein is Ribulose bisphosphate carboxylase large chain.